Consider the following 154-residue polypeptide: Xanthine-guanine phosphoribosyltransferase (154 aa).

5-phospho-alpha-D-ribose 1-diphosphate is bound by residues 37–38 (RG) and 90–98 (DDLVDTGNT). Aspartate 91 is a binding site for Mg(2+). 2 residues coordinate guanine: aspartate 94 and isoleucine 137. Residues aspartate 94 and isoleucine 137 each coordinate xanthine. GMP contacts are provided by residues 94–98 (DTGNT) and 136–137 (WI).

It belongs to the purine/pyrimidine phosphoribosyltransferase family. XGPT subfamily. In terms of assembly, homotetramer. It depends on Mg(2+) as a cofactor.

The protein localises to the cell inner membrane. The catalysed reaction is GMP + diphosphate = guanine + 5-phospho-alpha-D-ribose 1-diphosphate. The enzyme catalyses XMP + diphosphate = xanthine + 5-phospho-alpha-D-ribose 1-diphosphate. It carries out the reaction IMP + diphosphate = hypoxanthine + 5-phospho-alpha-D-ribose 1-diphosphate. It participates in purine metabolism; GMP biosynthesis via salvage pathway; GMP from guanine: step 1/1. It functions in the pathway purine metabolism; XMP biosynthesis via salvage pathway; XMP from xanthine: step 1/1. Functionally, purine salvage pathway enzyme that catalyzes the transfer of the ribosyl-5-phosphate group from 5-phospho-alpha-D-ribose 1-diphosphate (PRPP) to the N9 position of the 6-oxopurines guanine and xanthine to form the corresponding ribonucleotides GMP (guanosine 5'-monophosphate) and XMP (xanthosine 5'-monophosphate), with the release of PPi. To a lesser extent, also acts on hypoxanthine. The chain is Xanthine-guanine phosphoribosyltransferase from Histophilus somni (strain 129Pt) (Haemophilus somnus).